The chain runs to 186 residues: Ribosome-recycling factor (186 aa).

The protein belongs to the RRF family.

It localises to the cytoplasm. Responsible for the release of ribosomes from messenger RNA at the termination of protein biosynthesis. May increase the efficiency of translation by recycling ribosomes from one round of translation to another. The protein is Ribosome-recycling factor of Endomicrobium trichonymphae.